Reading from the N-terminus, the 151-residue chain is Large ribosomal subunit protein uL13 (151 aa).

It belongs to the universal ribosomal protein uL13 family. Part of the 50S ribosomal subunit.

In terms of biological role, this protein is one of the early assembly proteins of the 50S ribosomal subunit, although it is not seen to bind rRNA by itself. It is important during the early stages of 50S assembly. This is Large ribosomal subunit protein uL13 from Microchaete diplosiphon (Fremyella diplosiphon).